Reading from the N-terminus, the 440-residue chain is MIAMDIREIGLRLVGEAIKAADPYRAVLNAVKVSDDKIIVQGKEFEIKGKVYVIALGKAACEMARAIEDILDVEDGVAVTKYGYGKELKRIKVIEAGHPIPDEKSILGAKEALSILNRARENDIVFILISGGGSALFELPEEGISLEDLKLTTDLLLKSGAKIHEINTVRKHISKVKGGKLAKMIKGTGIVLIISDVVGDNLEAIASGPTVKDPTTFEDAKRILELYDIWEKVPESVRLHIERGLRGEVEETLKEDLPNVHNFLIASNSISCEAIAREAQRLGFKAYIMTTTLEGEAKDAGLFIGSIVQEIAERGRPFEPPVVLVFGGETTVTIEGKGGKGGPNQEIALSATRKISDLEALIVAFDTDGTDGPTDAAGGIVDGTTYKKLREKGIDVEKVLKEHNSYEALKKVGGLLFTGPTGTNVNSIVIAIVTSKRGRT.

Lys-58 serves as a coordination point for substrate.

The protein belongs to the glycerate kinase type-1 family. Homodimer. Requires Mg(2+) as cofactor. It depends on Ni(2+) as a cofactor. Mn(2+) is required as a cofactor. Co(2+) serves as cofactor.

It carries out the reaction (R)-glycerate + ATP = (2R)-2-phosphoglycerate + ADP + H(+). Functionally, catalyzes the ATP-dependent phosphorylation of D-glycerate to 2-phosphoglycerate. It can also utilize GTP, CTP, UTP, ADP or pyrophosphate as phosphate donor. This is Glycerate 2-kinase (gck) from Pyrococcus horikoshii (strain ATCC 700860 / DSM 12428 / JCM 9974 / NBRC 100139 / OT-3).